Reading from the N-terminus, the 105-residue chain is Heat shock protein HspQ (105 aa).

It belongs to the HspQ family.

Its subcellular location is the cytoplasm. Functionally, involved in the degradation of certain denaturated proteins, including DnaA, during heat shock stress. The protein is Heat shock protein HspQ of Yersinia enterocolitica serotype O:8 / biotype 1B (strain NCTC 13174 / 8081).